A 313-amino-acid chain; its full sequence is Probable alpha-L-glutamate ligase (313 aa).

One can recognise an ATP-grasp domain in the interval 112-294 (LQMLMAQGIA…IALQMIVHLE (183 aa)). ATP contacts are provided by residues lysine 148, 185-186 (EF), aspartate 194, and 218-220 (RAN). Mg(2+) contacts are provided by aspartate 255, glutamate 267, and asparagine 269. Residues aspartate 255, glutamate 267, and asparagine 269 each contribute to the Mn(2+) site.

This sequence belongs to the RimK family. It depends on Mg(2+) as a cofactor. The cofactor is Mn(2+).

The protein is Probable alpha-L-glutamate ligase of Pasteurella multocida (strain Pm70).